A 446-amino-acid chain; its full sequence is Maltoporin (446 aa).

The N-terminal stretch at Met1 to Ala25 is a signal peptide.

It belongs to the porin LamB (TC 1.B.3) family. In terms of assembly, homotrimer formed of three 18-stranded antiparallel beta-barrels, containing three independent channels.

It is found in the cell outer membrane. The catalysed reaction is beta-maltose(in) = beta-maltose(out). Involved in the transport of maltose and maltodextrins. In Escherichia coli O157:H7 (strain EC4115 / EHEC), this protein is Maltoporin.